The primary structure comprises 477 residues: Glutamate--tRNA ligase (477 aa).

A 'HIGH' region motif is present at residues 8–18 (PSPTGTLHIGT). Positions 247 to 251 (KLSKR) match the 'KMSKS' region motif. ATP is bound at residue Lys-250.

The protein belongs to the class-I aminoacyl-tRNA synthetase family. Glutamate--tRNA ligase type 1 subfamily. Monomer.

The protein resides in the cytoplasm. It carries out the reaction tRNA(Glu) + L-glutamate + ATP = L-glutamyl-tRNA(Glu) + AMP + diphosphate. In terms of biological role, catalyzes the attachment of glutamate to tRNA(Glu) in a two-step reaction: glutamate is first activated by ATP to form Glu-AMP and then transferred to the acceptor end of tRNA(Glu). The sequence is that of Glutamate--tRNA ligase from Synechococcus sp. (strain CC9902).